Consider the following 115-residue polypeptide: MHELSIARSIVELVEEQADNRGASVVEELELEIGHLSGVEIQTLEFALDSAIKGSKLEKARIIRHYIEGEGQCSDCETIFPMNALFSPCPHCGSYLVKILKGKELRVKSIVIKKE.

His-2 is a Ni(2+) binding site. Positions 73, 76, 89, and 92 each coordinate Zn(2+).

The protein belongs to the HypA/HybF family.

Functionally, involved in the maturation of [NiFe] hydrogenases. Required for nickel insertion into the metal center of the hydrogenase. In Parabacteroides distasonis (strain ATCC 8503 / DSM 20701 / CIP 104284 / JCM 5825 / NCTC 11152), this protein is Hydrogenase maturation factor HypA.